The sequence spans 414 residues: MYHRNILIEQTDPEIFAAIQAENARQEHHIELIASENYASPAVMAAQGSQLTNKYAEGYPGRRYYGGCEHVDVAEQLAIDRVKQIFGADAANVQPHCGASANEAVFLAFLKPGDTIMGMSLAEGGHLTHGMALNMSGKWFNVVSYGLNDKEEIDYEAMERKAHETKPKLIIAGASAYSLAIDFERFARVAKDVGAIFMVDMAHYAGLIAAGIYPNPVPHADIVTSTTHKSLRGPRGGIILMKAQHEKIINSAIFPGLQGGPLMHVIAAKAIAFKEALSPEFKIYQQQVLKNAQIVAETLTQRGLRIVSGRTESHVMLVDLRAKGITGKEAEAVLGSAHMTINKNAIPNDPEKPMVTSGVRIGTPAMTTRGFGDEEARMTANLVADVLDNPRDAANIEAVRAKVHALTSRFPVYG.

(6S)-5,6,7,8-tetrahydrofolate contacts are provided by residues Leu121 and 125–127 (GHL). Residue Lys229 is modified to N6-(pyridoxal phosphate)lysine.

Belongs to the SHMT family. Homodimer. It depends on pyridoxal 5'-phosphate as a cofactor.

It localises to the cytoplasm. The enzyme catalyses (6R)-5,10-methylene-5,6,7,8-tetrahydrofolate + glycine + H2O = (6S)-5,6,7,8-tetrahydrofolate + L-serine. It participates in one-carbon metabolism; tetrahydrofolate interconversion. The protein operates within amino-acid biosynthesis; glycine biosynthesis; glycine from L-serine: step 1/1. Functionally, catalyzes the reversible interconversion of serine and glycine with tetrahydrofolate (THF) serving as the one-carbon carrier. This reaction serves as the major source of one-carbon groups required for the biosynthesis of purines, thymidylate, methionine, and other important biomolecules. Also exhibits THF-independent aldolase activity toward beta-hydroxyamino acids, producing glycine and aldehydes, via a retro-aldol mechanism. This is Serine hydroxymethyltransferase from Polaromonas naphthalenivorans (strain CJ2).